We begin with the raw amino-acid sequence, 252 residues long: Imidazole glycerol phosphate synthase subunit HisF (252 aa).

Catalysis depends on residues aspartate 11 and aspartate 130.

This sequence belongs to the HisA/HisF family. In terms of assembly, heterodimer of HisH and HisF.

It localises to the cytoplasm. The catalysed reaction is 5-[(5-phospho-1-deoxy-D-ribulos-1-ylimino)methylamino]-1-(5-phospho-beta-D-ribosyl)imidazole-4-carboxamide + L-glutamine = D-erythro-1-(imidazol-4-yl)glycerol 3-phosphate + 5-amino-1-(5-phospho-beta-D-ribosyl)imidazole-4-carboxamide + L-glutamate + H(+). It participates in amino-acid biosynthesis; L-histidine biosynthesis; L-histidine from 5-phospho-alpha-D-ribose 1-diphosphate: step 5/9. IGPS catalyzes the conversion of PRFAR and glutamine to IGP, AICAR and glutamate. The HisF subunit catalyzes the cyclization activity that produces IGP and AICAR from PRFAR using the ammonia provided by the HisH subunit. In Bacillus anthracis (strain CDC 684 / NRRL 3495), this protein is Imidazole glycerol phosphate synthase subunit HisF.